The chain runs to 130 residues: MAPRLGIFLLWAGVSVFLPLDPVNGDQHLPGRFLTPAITSDDKCVFPFIYKGNLYFDCTLHDSTYYWCSVTTYYMKRWRYCRSTDYARCALPFIFRGKEYDSCIKEGSVFSKYWCPVTPNYDQDRAWRYC.

A signal peptide spans Met-1–Gly-25. Fibronectin type-II domains lie at Thr-39–Ser-83 and Thr-84–Cys-130. 4 disulfides stabilise this stretch: Cys-44–Cys-68, Cys-58–Cys-81, Cys-89–Cys-115, and Cys-103–Cys-130.

It belongs to the seminal plasma protein family. Component of seminal plasma.

Its subcellular location is the secreted. In terms of biological role, may form a complex with spermadhesin AQN-1 which possesses phosphorylcholine-binding activity. The polypeptide is Seminal plasma protein pB1 (Sus scrofa (Pig)).